The sequence spans 138 residues: Large ribosomal subunit protein uL16 (138 aa).

The segment covering 1–13 (MLQPKRRKYRKEQ) has biased composition (basic residues). Residues 1–24 (MLQPKRRKYRKEQKGRNTGKATRG) are disordered.

Belongs to the universal ribosomal protein uL16 family. As to quaternary structure, part of the 50S ribosomal subunit.

Its function is as follows. Binds 23S rRNA and is also seen to make contacts with the A and possibly P site tRNAs. In Burkholderia ambifaria (strain ATCC BAA-244 / DSM 16087 / CCUG 44356 / LMG 19182 / AMMD) (Burkholderia cepacia (strain AMMD)), this protein is Large ribosomal subunit protein uL16.